Reading from the N-terminus, the 468-residue chain is 3-isopropylmalate dehydratase large subunit (468 aa).

3 residues coordinate [4Fe-4S] cluster: cysteine 347, cysteine 407, and cysteine 410.

Belongs to the aconitase/IPM isomerase family. LeuC type 1 subfamily. As to quaternary structure, heterodimer of LeuC and LeuD. Requires [4Fe-4S] cluster as cofactor.

It catalyses the reaction (2R,3S)-3-isopropylmalate = (2S)-2-isopropylmalate. The protein operates within amino-acid biosynthesis; L-leucine biosynthesis; L-leucine from 3-methyl-2-oxobutanoate: step 2/4. In terms of biological role, catalyzes the isomerization between 2-isopropylmalate and 3-isopropylmalate, via the formation of 2-isopropylmaleate. This Glaesserella parasuis serovar 5 (strain SH0165) (Haemophilus parasuis) protein is 3-isopropylmalate dehydratase large subunit.